Consider the following 313-residue polypeptide: tRNA-cytidine(32) 2-sulfurtransferase (313 aa).

A PP-loop motif motif is present at residues 54-59 (SGGKDS). The [4Fe-4S] cluster site is built by cysteine 129, cysteine 132, and cysteine 220.

This sequence belongs to the TtcA family. As to quaternary structure, homodimer. Mg(2+) is required as a cofactor. It depends on [4Fe-4S] cluster as a cofactor.

It is found in the cytoplasm. It catalyses the reaction cytidine(32) in tRNA + S-sulfanyl-L-cysteinyl-[cysteine desulfurase] + AH2 + ATP = 2-thiocytidine(32) in tRNA + L-cysteinyl-[cysteine desulfurase] + A + AMP + diphosphate + H(+). Its pathway is tRNA modification. Catalyzes the ATP-dependent 2-thiolation of cytidine in position 32 of tRNA, to form 2-thiocytidine (s(2)C32). The sulfur atoms are provided by the cysteine/cysteine desulfurase (IscS) system. This chain is tRNA-cytidine(32) 2-sulfurtransferase, found in Methylibium petroleiphilum (strain ATCC BAA-1232 / LMG 22953 / PM1).